The primary structure comprises 1171 residues: DNA-directed RNA polymerase subunit beta (1171 aa).

It belongs to the RNA polymerase beta chain family. As to quaternary structure, the RNAP catalytic core consists of 2 alpha, 1 beta, 1 beta' and 1 omega subunit. When a sigma factor is associated with the core the holoenzyme is formed, which can initiate transcription.

It catalyses the reaction RNA(n) + a ribonucleoside 5'-triphosphate = RNA(n+1) + diphosphate. Its function is as follows. DNA-dependent RNA polymerase catalyzes the transcription of DNA into RNA using the four ribonucleoside triphosphates as substrates. This chain is DNA-directed RNA polymerase subunit beta, found in Corynebacterium efficiens (strain DSM 44549 / YS-314 / AJ 12310 / JCM 11189 / NBRC 100395).